The primary structure comprises 256 residues: Thiazole synthase (256 aa).

Lysine 95 serves as the catalytic Schiff-base intermediate with DXP. 1-deoxy-D-xylulose 5-phosphate contacts are provided by residues glycine 156, 182-183 (AG), and 204-205 (NT).

Belongs to the ThiG family. As to quaternary structure, homotetramer. Forms heterodimers with either ThiH or ThiS.

Its subcellular location is the cytoplasm. The catalysed reaction is [ThiS sulfur-carrier protein]-C-terminal-Gly-aminoethanethioate + 2-iminoacetate + 1-deoxy-D-xylulose 5-phosphate = [ThiS sulfur-carrier protein]-C-terminal Gly-Gly + 2-[(2R,5Z)-2-carboxy-4-methylthiazol-5(2H)-ylidene]ethyl phosphate + 2 H2O + H(+). The protein operates within cofactor biosynthesis; thiamine diphosphate biosynthesis. Its function is as follows. Catalyzes the rearrangement of 1-deoxy-D-xylulose 5-phosphate (DXP) to produce the thiazole phosphate moiety of thiamine. Sulfur is provided by the thiocarboxylate moiety of the carrier protein ThiS. In vitro, sulfur can be provided by H(2)S. In Cronobacter sakazakii (strain ATCC BAA-894) (Enterobacter sakazakii), this protein is Thiazole synthase.